We begin with the raw amino-acid sequence, 518 residues long: RNA-binding protein FUS (518 aa).

Polar residues predominate over residues 1–14 (MASNDYTQQATQSY). Residues 1-279 (MASNDYTQQA…SEQDNSDNNT (279 aa)) form a disordered region. Composition is skewed to low complexity over residues 20 to 63 (QPGQ…GQTQ), 84 to 105 (SSQS…GQQP), and 116 to 126 (GSSQSSSYGQP). Positions 127 to 139 (QSGGYGQQSGYGG) are enriched in gly residues. Low complexity predominate over residues 140–166 (QQQSYGQQQSSYNPPQGYGQQNQYNSS). 2 stretches are compositionally biased toward gly residues: residues 167 to 178 (SGGGGGGGGGNY) and 186 to 225 (SGGG…GGGY). An asymmetric dimethylarginine; alternate mark is found at arginine 217 and arginine 219. Omega-N-methylarginine; alternate occurs at positions 217 and 219. Arginine 235, arginine 237, arginine 241, arginine 244, and arginine 252 each carry asymmetric dimethylarginine. Residues 237–252 (RGGGRGGRGGMGGSDR) show a composition bias toward gly residues. Serine 270 bears the Phosphoserine mark. Residues 278 to 364 (NTIFVQGLGE…NPIKVSFATR (87 aa)) form the RRM domain. Phosphothreonine is present on threonine 279. Lysine 327 participates in a covalent cross-link: Glycyl lysine isopeptide (Lys-Gly) (interchain with G-Cter in SUMO2). Serine 333 carries the phosphoserine modification. Disordered regions lie at residues 368 to 417 (FNRG…QRAG) and 437 to 518 (CNQC…ERPY). Arginine 370, arginine 376, arginine 379, arginine 381, and arginine 387 each carry asymmetric dimethylarginine. A compositionally biased stretch (gly residues) spans 370–414 (RGGGNGRGGRGRGGPMGRGGYGGGGSGGGGRGGFPSGGGGGGGQQ). Residue arginine 400 is modified to Asymmetric dimethylarginine; alternate. An Omega-N-methylarginine; alternate modification is found at arginine 400. The RanBP2-type zinc-finger motif lies at 415-446 (RAGDWKCPNPTCENMNFSWRNECNQCKAPKPD). The segment covering 447-461 (GPGGGPGGSHMGGNY) has biased composition (gly residues). Over residues 462-485 (GDDRRGRGGYDRGGYRGRGGDRGG) the composition is skewed to basic and acidic residues. Residues arginine 466, arginine 468, arginine 473, arginine 477, arginine 479, arginine 483, arginine 487, and arginine 490 each carry the asymmetric dimethylarginine modification. Residues 486–500 (FRGGRGGGDRGGFGP) show a composition bias toward gly residues. Arginine 495 carries the asymmetric dimethylarginine; alternate modification. At arginine 495 the chain carries Omega-N-methylarginine; alternate. Residues 503–518 (MDSRGEHRQDRRERPY) are compositionally biased toward basic and acidic residues.

This sequence belongs to the RRM TET family. In terms of assembly, self-oligomerizes (via N-terminal region). Oligomerization is essential for chromatin binding. Component of nuclear riboprotein complexes. Interacts with ILF3, TDRD3 and SF1. Interacts through its C-terminus with SFRS13A. Interacts with OTUB1 and SARNP. Interacts with LRSAM1. Interacts with SAFB1 in a DNA-dependent manner; this interaction tethers FUS to chromatin. Interacts with MATR3. Interacts with SNRNP70 and POLR2A; these interactions couple RNA transcription and splicing. Interacts (through its RNA-binding domain) with RALY (through its RNA-binding domain); both are components of the same RNPs. In terms of processing, phosphorylated in its N-terminal serine residues upon induced DNA damage. ATM and DNA-PK are able to phosphorylate FUS N-terminal region.

The protein localises to the nucleus. Its function is as follows. DNA/RNA-binding protein that plays a role in various cellular processes such as transcription regulation, RNA splicing, RNA transport, DNA repair and damage response. Binds to ssRNA containing the consensus sequence 5'-AGGUAA-3'. Binds to nascent pre-mRNAs and acts as a molecular mediator between RNA polymerase II and U1 small nuclear ribonucleoprotein thereby coupling transcription and splicing. Also binds its own pre-mRNA and autoregulates its expression; this autoregulation mechanism is mediated by non-sense-mediated decay. Plays a role in DNA repair mechanisms by promoting D-loop formation and homologous recombination during DNA double-strand break repair. In neuronal cells, plays crucial roles in dendritic spine formation and stability, RNA transport, mRNA stability and synaptic homeostasis. The sequence is that of RNA-binding protein FUS (Fus) from Mus musculus (Mouse).